Here is a 200-residue protein sequence, read N- to C-terminus: Holliday junction branch migration complex subunit RuvA (200 aa).

Residues M1–S65 form a domain I region. The segment at S66 to P144 is domain II. Residues V145–S149 are flexible linker. The domain III stretch occupies residues T150–S200.

Belongs to the RuvA family. In terms of assembly, homotetramer. Forms an RuvA(8)-RuvB(12)-Holliday junction (HJ) complex. HJ DNA is sandwiched between 2 RuvA tetramers; dsDNA enters through RuvA and exits via RuvB. An RuvB hexamer assembles on each DNA strand where it exits the tetramer. Each RuvB hexamer is contacted by two RuvA subunits (via domain III) on 2 adjacent RuvB subunits; this complex drives branch migration. In the full resolvosome a probable DNA-RuvA(4)-RuvB(12)-RuvC(2) complex forms which resolves the HJ.

It localises to the cytoplasm. Its function is as follows. The RuvA-RuvB-RuvC complex processes Holliday junction (HJ) DNA during genetic recombination and DNA repair, while the RuvA-RuvB complex plays an important role in the rescue of blocked DNA replication forks via replication fork reversal (RFR). RuvA specifically binds to HJ cruciform DNA, conferring on it an open structure. The RuvB hexamer acts as an ATP-dependent pump, pulling dsDNA into and through the RuvAB complex. HJ branch migration allows RuvC to scan DNA until it finds its consensus sequence, where it cleaves and resolves the cruciform DNA. This Chlamydia trachomatis serovar D (strain ATCC VR-885 / DSM 19411 / UW-3/Cx) protein is Holliday junction branch migration complex subunit RuvA.